The following is a 261-amino-acid chain: Mannose-specific lectin 2 (261 aa).

The signal sequence occupies residues 1 to 23 (MAKLLLFLLPAILGLLIPRSAVA). Bulb-type lectin domains follow at residues 26-131 (TNYL…PWVP) and 145-252 (DNLL…SKRS). Beta-D-mannose-binding positions include 51 to 55 (QNDCN), Tyr59, Trp63, Gln64, 170 to 174 (QGDCN), Tyr178, and 182 to 185 (YGWQ). The Carbohydrate-binding motif 1 signature appears at 51–59 (QNDCNLVLY). Disulfide bonds link Cys54-Cys74 and Cys173-Cys195. Positions 170 to 178 (QGDCNLVLY) match the Carbohydrate-binding motif 2 motif.

As to quaternary structure, forms heterotetramer of 2 chains 1 and 2 chains 2 arranged as a dimer of chain 1 and chain 2 heterodimers.

Functionally, mannose-specific lectin. Shows agglutinating activity towards erythrocytes from rabbit. In Colocasia esculenta (Wild taro), this protein is Mannose-specific lectin 2.